A 431-amino-acid polypeptide reads, in one-letter code: MGQEVRYRVRGGHALHGTAFIQGAKNAVLPMIGAALLASKGRTVLRNVPVIEDVRRALELAEYVGAKVEFHEAERTIVIDATGLNDPNRAVLPASIASRFRGSVLFIPALMHRMGRARIEGVGGCNLGSRNLDFHYRGFARLGAEVTEDPERKHINVKADNLKGGRLYLDTPSHTGTENLIMAAALTPGTTVIEHAALEPEVLDVIEFLGSMGAKISGGGTGFIKVEGVSELTAVEHTVMPDRIDTGVFAMMTAATGGDVSLVGANLDHLGVARWKLEQMGVQFTQQGAVLRVRRDPNVPLRPINAVTSPFPGFATDLQPPLMALATLAEGESYIREAIFDGRFALADELNKMGAKIEVEGNRAIVHGPSELHGTKVTAHDLRCGAGAIMAGLVAKGETIVSPAYQVDRGHSHFATRLSALGADVVREEVS.

25–26 (KN) lines the phosphoenolpyruvate pocket. Arginine 101 is a UDP-N-acetyl-alpha-D-glucosamine binding site. Cysteine 125 serves as the catalytic Proton donor. Cysteine 125 is subject to 2-(S-cysteinyl)pyruvic acid O-phosphothioketal. 2 residues coordinate UDP-N-acetyl-alpha-D-glucosamine: aspartate 317 and isoleucine 339.

This sequence belongs to the EPSP synthase family. MurA subfamily.

The protein localises to the cytoplasm. The enzyme catalyses phosphoenolpyruvate + UDP-N-acetyl-alpha-D-glucosamine = UDP-N-acetyl-3-O-(1-carboxyvinyl)-alpha-D-glucosamine + phosphate. It participates in cell wall biogenesis; peptidoglycan biosynthesis. In terms of biological role, cell wall formation. Adds enolpyruvyl to UDP-N-acetylglucosamine. This chain is UDP-N-acetylglucosamine 1-carboxyvinyltransferase, found in Thermobifida fusca (strain YX).